The chain runs to 249 residues: MATLRVHPEAQAKVDVFREDLCSKTENLLGSYFPKKISELDAFLKEPALNEANLSNLKAPLDIPVPDPVKEKEKEERKKQQEKEEKEEKKKGDEDDKGPPCGPVNCNEKIVVLLQRLKPEIKDVTEQLNLVTTWLQLQIPRIEDGNNFGVAVQEKVFELMTNLHTKLEGFHTQISKYFSERGDAVAKAAKQPHVGDYRQLVHELDEAEYQEIRLMVMEIRNAYAVLYDIILKNFEKLKKPRGETKGMIY.

A disordered region spans residues 59 to 102; it reads APLDIPVPDPVKEKEKEERKKQQEKEEKEEKKKGDEDDKGPPCG. Over residues 68–98 the composition is skewed to basic and acidic residues; the sequence is PVKEKEKEERKKQQEKEEKEEKKKGDEDDKG.

The protein belongs to the PA28 family. As to quaternary structure, heterodimer of PSME1 and PSME2, which forms a hexameric ring. PSME1 can form homoheptamers.

Functionally, implicated in immunoproteasome assembly and required for efficient antigen processing. The PA28 activator complex enhances the generation of class I binding peptides by altering the cleavage pattern of the proteasome. The protein is Proteasome activator complex subunit 1 (Psme1) of Mus musculus (Mouse).